The primary structure comprises 435 residues: Putative pyridoxal-phosphate dependent protein F13B12.4 (435 aa).

The signal sequence occupies residues M1–A18. N79 carries an N-linked (GlcNAc...) asparagine glycan. K89 carries the N6-(pyridoxal phosphate)lysine modification. Residue G235–T239 participates in pyridoxal 5'-phosphate binding. N277 is a glycosylation site (N-linked (GlcNAc...) asparagine). S342 is a pyridoxal 5'-phosphate binding site.

Belongs to the cysteine synthase/cystathionine beta-synthase family. Highly divergent.

This is Putative pyridoxal-phosphate dependent protein F13B12.4 from Caenorhabditis elegans.